Reading from the N-terminus, the 171-residue chain is 3-hydroxydecanoyl-[acyl-carrier-protein] dehydratase (171 aa).

The active site involves His-70.

The protein belongs to the thioester dehydratase family. FabA subfamily. Homodimer.

Its subcellular location is the cytoplasm. The enzyme catalyses a (3R)-hydroxyacyl-[ACP] = a (2E)-enoyl-[ACP] + H2O. It carries out the reaction (3R)-hydroxydecanoyl-[ACP] = (2E)-decenoyl-[ACP] + H2O. It catalyses the reaction (2E)-decenoyl-[ACP] = (3Z)-decenoyl-[ACP]. The protein operates within lipid metabolism; fatty acid biosynthesis. In terms of biological role, necessary for the introduction of cis unsaturation into fatty acids. Catalyzes the dehydration of (3R)-3-hydroxydecanoyl-ACP to E-(2)-decenoyl-ACP and then its isomerization to Z-(3)-decenoyl-ACP. Can catalyze the dehydratase reaction for beta-hydroxyacyl-ACPs with saturated chain lengths up to 16:0, being most active on intermediate chain length. The polypeptide is 3-hydroxydecanoyl-[acyl-carrier-protein] dehydratase (Pseudomonas aeruginosa (strain LESB58)).